The sequence spans 225 residues: MRFVVLTMFPEVFPGPLGVSVIGRGLANGYWSLEVIPIRRFAVNSRVDDAPYGGGPGMVMRADVLGEAFEYANSTYQIKRRIFLSPRGTKFVQNSTANLVEADNVLLICGRFEGVDQRFLNYYNVEELSVGDYVLSGGEIAAMAVIDSCVRCIPGVLGNLQSLECESFVGSSLEYDHYTRPNSWKGLSVPEVLMSGNHRKISEWRVNSAATATGRNRPDLVEEES.

S-adenosyl-L-methionine contacts are provided by residues Gly-110 and 130 to 135; that span reads VGDYVL.

It belongs to the RNA methyltransferase TrmD family. In terms of assembly, homodimer.

Its subcellular location is the cytoplasm. It carries out the reaction guanosine(37) in tRNA + S-adenosyl-L-methionine = N(1)-methylguanosine(37) in tRNA + S-adenosyl-L-homocysteine + H(+). Functionally, specifically methylates guanosine-37 in various tRNAs. This chain is tRNA (guanine-N(1)-)-methyltransferase, found in Neorickettsia sennetsu (strain ATCC VR-367 / Miyayama) (Ehrlichia sennetsu).